A 525-amino-acid chain; its full sequence is Patatin-like protein 8 (525 aa).

Positions 1–50 (MNRRYEKPPPLSVSSKGKKKHFVNHTAPNTPGNYERTQTSPTLSTARSHE) are disordered. Polar residues predominate over residues 26 to 46 (TAPNTPGNYERTQTSPTLSTA). Residues 124–338 (LSIDGGGMRG…AMSNPTAAAI (215 aa)) form the PNPLA domain. Positions 128 to 133 (GGGMRG) match the GXGXXG motif. Residue serine 168 is the Nucleophile of the active site.

The protein belongs to the patatin family. As to expression, specifically expressed in roots.

Its function is as follows. Possesses non-specific lipolytic acyl hydrolase (LAH) activity. Hydrolyzes phospholipids as well as galactolipids. May play a role in disease resistance. The sequence is that of Patatin-like protein 8 (PLP8) from Arabidopsis thaliana (Mouse-ear cress).